Reading from the N-terminus, the 1288-residue chain is (E3-independent) E2 ubiquitin-conjugating enzyme UBE2O (1288 aa).

Composition is skewed to low complexity over residues 1-26 and 34-47; these read MADPAAPAPAQAQAAAAPTPAAAPAA and ATDSASGPSSDSGP. Disordered regions lie at residues 1–51 and 80–109; these read MADP…EAGS and EDSDSEGDDDGRGSSGCSEAGGAGHEEGRA. Phosphoserine is present on residues Ser45, Ser82, Ser84, and Ser394. Disordered stretches follow at residues 396 to 529 and 711 to 743; these read TPDT…KNKV and ESDYDSVEGSSSGASSDEWEDDSDSWETDNGLV. Residues 401–418 are compositionally biased toward basic and acidic residues; it reads CPRDHSMEDPDKKGEARA. Ser436 is subject to Phosphoserine. A compositionally biased stretch (acidic residues) spans 440–450; sequence MQDEGSEELQE. Over residues 462–472 the composition is skewed to basic and acidic residues; the sequence is EGGDDGLHSAE. A compositionally biased stretch (acidic residues) spans 473 to 485; it reads QDADDEAADDTDD. Phosphothreonine is present on residues Thr483 and Thr486. Over residues 486-502 the composition is skewed to low complexity; sequence TSSVTSSASSTTSSQSG. Ser510 is subject to Phosphoserine. Over residues 517–528 the composition is skewed to basic residues; the sequence is NLKRKHKRKKNK. The span at 717 to 726 shows a compositional bias: low complexity; that stretch reads VEGSSSGASS. Positions 727–737 are enriched in acidic residues; the sequence is DEWEDDSDSWE. Residues 809 to 879 adopt a coiled-coil conformation; that stretch reads RELKEAIKIL…IAEEEKMEAV (71 aa). The residue at position 833 (Ser833) is a Phosphoserine. Thr835 carries the post-translational modification Phosphothreonine. At Ser836 the chain carries Phosphoserine. Positions 872–890 are enriched in basic and acidic residues; sequence EEEKMEAVPDTERKEEKPE. The interval 872-899 is disordered; it reads EEEKMEAVPDTERKEEKPEVQSPVKAEW. Ser893 carries the post-translational modification Phosphoserine. The UBC core domain occupies 950 to 1110; the sequence is KFFSTVRKEM…ALIRVVQSMT (161 aa). Cys1037 (glycyl thioester intermediate) is an active-site residue. The interval 1158-1247 is disordered; that stretch reads GALKDSSSLE…RSFLPEKSGY (90 aa).

This sequence belongs to the ubiquitin-conjugating enzyme family. As to quaternary structure, interacts with CPNE1 (via VWFA domain) and CPNE4 (via VWFA domain). Interacts with UBR2. Post-translationally, phosphorylated. Phosphorylation affects subcellular location. In terms of processing, ubiquitinated: autoubiquitinates, possibly affecting its subcellular location. As to expression, highly expressed in reticulocytes.

It is found in the cytoplasm. It localises to the nucleus. It carries out the reaction S-ubiquitinyl-[E1 ubiquitin-activating enzyme]-L-cysteine + [acceptor protein]-L-lysine = [E1 ubiquitin-activating enzyme]-L-cysteine + N(6)-monoubiquitinyl-[acceptor protein]-L-lysine.. Its pathway is protein modification; protein ubiquitination. Inhibited by inorganic arsenite such as phenylarsenoxides. Functionally, E2/E3 hybrid ubiquitin-protein ligase that displays both E2 and E3 ligase activities and mediates monoubiquitination of target proteins. Negatively regulates TRAF6-mediated NF-kappa-B activation independently of its E2 activity. Acts as a positive regulator of BMP7 signaling by mediating monoubiquitination of SMAD6, thereby regulating adipogenesis. Mediates monoubiquitination at different sites of the nuclear localization signal (NLS) of BAP1, leading to cytoplasmic retention of BAP1. Also able to monoubiquitinate the NLS of other chromatin-associated proteins, such as INO80 and CXXC1, affecting their subcellular location. Acts as a regulator of retrograde transport by assisting the TRIM27:MAGEL2 E3 ubiquitin ligase complex to mediate 'Lys-63'-linked ubiquitination of WASHC1, leading to promote endosomal F-actin assembly. The chain is (E3-independent) E2 ubiquitin-conjugating enzyme UBE2O (Ube2o) from Mus musculus (Mouse).